The sequence spans 77 residues: U18-lycotoxin-Ls1a (77 aa).

The first 22 residues, 1-22, serve as a signal peptide directing secretion; the sequence is MSPKMQALLLLLGLITLLVVHA. A propeptide spanning residues 23–34 is cleaved from the precursor; it reads EEELSENTESER. 4 cysteine pairs are disulfide-bonded: cysteine 36–cysteine 51, cysteine 43–cysteine 56, cysteine 50–cysteine 67, and cysteine 58–cysteine 65.

Belongs to the neurotoxin 02 (plectoxin) family. In terms of tissue distribution, expressed by the venom gland.

The protein localises to the secreted. This chain is U18-lycotoxin-Ls1a, found in Lycosa singoriensis (Wolf spider).